Here is a 298-residue protein sequence, read N- to C-terminus: Arginine/serine-rich protein 1 (298 aa).

Positions 1–135 (MSSAAMSKYV…SRSRSRGRSQ (135 aa)) are disordered. Position 17 is a phosphoserine (Ser-17). The span at 23 to 36 (SPSTSGSGRSSRLS) shows a compositional bias: low complexity. A compositionally biased stretch (basic residues) spans 60 to 105 (SRSHSRPRRSRRSRSRSRRRHQRKYRRYSRSYSRSRSRSRSHRYHR). Phosphoserine is present on residues Ser-118 and Ser-120. The span at 124–135 (SRSRSRSRGRSQ) shows a compositional bias: basic residues. Arg-145 bears the Omega-N-methylarginine mark. Disordered stretches follow at residues 161-181 (RPRW…TPFR) and 218-298 (ASQG…WIPV). The span at 219–228 (SQGTAVSSSG) shows a compositional bias: polar residues. Over residues 230–246 (KVEHSEKQTEDATKNTS) the composition is skewed to basic and acidic residues. Polar residues predominate over residues 247 to 271 (EKSSTQRNIAFSSNNSVAKPLQKTT). A compositionally biased stretch (basic and acidic residues) spans 274–289 (AVEEKSSGSPKIDKKK). Ser-282 is modified (phosphoserine).

It belongs to the RSRP family. In terms of processing, phosphorylated. Phosphorylation at Ser-118 and Ser-120 mediates the interaction with spliceosome proteins.

The protein resides in the nucleus. Its function is as follows. Probably acts as a spliceosomal factor that contributes to spliceosome assembly and regulates the isoform switching of proteins such as PARP6. This is Arginine/serine-rich protein 1 (Rsrp1) from Mus musculus (Mouse).